The chain runs to 121 residues: Large ribosomal subunit protein uL18 (121 aa).

This sequence belongs to the universal ribosomal protein uL18 family. As to quaternary structure, part of the 50S ribosomal subunit; part of the 5S rRNA/L5/L18/L25 subcomplex. Contacts the 5S and 23S rRNAs.

In terms of biological role, this is one of the proteins that bind and probably mediate the attachment of the 5S RNA into the large ribosomal subunit, where it forms part of the central protuberance. This chain is Large ribosomal subunit protein uL18, found in Polaromonas naphthalenivorans (strain CJ2).